We begin with the raw amino-acid sequence, 308 residues long: Membrane protein insertase YidC 1 (308 aa).

The N-terminal stretch at 1–22 (MKSIKRFALSAMGVAMLLVLTG) is a signal peptide. The N-palmitoyl cysteine moiety is linked to residue Cys-23. A lipid anchor (S-diacylglycerol cysteine) is attached at Cys-23. 5 helical membrane-spanning segments follow: residues 60–80 (FGVA…PLGI), 135–155 (FGGV…AIYF), 168–188 (YLGI…GVLY), 211–226 (MIYM…SLFS), and 232–252 (LYWV…NYIV). The segment at 263–308 (ELAKNPPKASAFSKPSGRKDVTPEQPTAITSKKKHKNRNAGKQRSR) is disordered. The span at 293-308 (SKKKHKNRNAGKQRSR) shows a compositional bias: basic residues.

Belongs to the OXA1/ALB3/YidC family. Type 2 subfamily.

The protein localises to the cell membrane. Functionally, required for the insertion and/or proper folding and/or complex formation of integral membrane proteins into the membrane. Involved in integration of membrane proteins that insert both dependently and independently of the Sec translocase complex, as well as at least some lipoproteins. The polypeptide is Membrane protein insertase YidC 1 (Streptococcus pneumoniae serotype 4 (strain ATCC BAA-334 / TIGR4)).